The chain runs to 476 residues: Bifunctional protein HldE (476 aa).

Residues 1–318 (MKPILPDYNS…AEAVHGSQDT (318 aa)) form a ribokinase region. 195 to 198 (NMKE) is an ATP binding site. Asp-264 is a catalytic residue. The segment at 344–476 (MTNGCFDILH…IINAIKGGKG (133 aa)) is cytidylyltransferase.

This sequence in the N-terminal section; belongs to the carbohydrate kinase PfkB family. It in the C-terminal section; belongs to the cytidylyltransferase family. In terms of assembly, homodimer.

The enzyme catalyses D-glycero-beta-D-manno-heptose 7-phosphate + ATP = D-glycero-beta-D-manno-heptose 1,7-bisphosphate + ADP + H(+). The catalysed reaction is D-glycero-beta-D-manno-heptose 1-phosphate + ATP + H(+) = ADP-D-glycero-beta-D-manno-heptose + diphosphate. It functions in the pathway nucleotide-sugar biosynthesis; ADP-L-glycero-beta-D-manno-heptose biosynthesis; ADP-L-glycero-beta-D-manno-heptose from D-glycero-beta-D-manno-heptose 7-phosphate: step 1/4. It participates in nucleotide-sugar biosynthesis; ADP-L-glycero-beta-D-manno-heptose biosynthesis; ADP-L-glycero-beta-D-manno-heptose from D-glycero-beta-D-manno-heptose 7-phosphate: step 3/4. Its pathway is bacterial outer membrane biogenesis; LPS core biosynthesis. In terms of biological role, catalyzes the phosphorylation of D-glycero-D-manno-heptose 7-phosphate at the C-1 position to selectively form D-glycero-beta-D-manno-heptose-1,7-bisphosphate. Its function is as follows. Catalyzes the ADP transfer from ATP to D-glycero-beta-D-manno-heptose 1-phosphate, yielding ADP-D-glycero-beta-D-manno-heptose. The sequence is that of Bifunctional protein HldE from Vibrio parahaemolyticus serotype O3:K6 (strain RIMD 2210633).